Reading from the N-terminus, the 142-residue chain is MIHFILIQNRQGKTRLSKWYTPYEDVEKRKLSHEIHKIVNSRETKFTNFVEFRTHRIVYRRYAGLFFSVCVDPTDNELFCLEAIHLFVEVLDAYFGNVCELDLVFNFYKVYAIIDEVFLAGELMEPSKHVILQRMEFLDNLP.

This sequence belongs to the adaptor complexes small subunit family. Adaptor protein complex 2 (AP-2) is a heterotetramer composed of two large adaptins (alpha-type and beta-type subunits), a medium adaptin (mu-type subunit AP50) and a small adaptin (sigma-type subunit AP17).

Its subcellular location is the cell membrane. The protein resides in the membrane. The protein localises to the coated pit. Functionally, component of the adaptor complexes which link clathrin to receptors in coated vesicles. Clathrin-associated protein complexes are believed to interact with the cytoplasmic tails of membrane proteins, leading to their selection and concentration. This is AP-2 complex subunit sigma (ap2s1) from Dictyostelium discoideum (Social amoeba).